The chain runs to 289 residues: 4-diphosphocytidyl-2-C-methyl-D-erythritol kinase (289 aa).

Lysine 11 is an active-site residue. 96 to 106 (PVAAGIGGGSS) contacts ATP. Residue aspartate 138 is part of the active site.

This sequence belongs to the GHMP kinase family. IspE subfamily.

It catalyses the reaction 4-CDP-2-C-methyl-D-erythritol + ATP = 4-CDP-2-C-methyl-D-erythritol 2-phosphate + ADP + H(+). Its pathway is isoprenoid biosynthesis; isopentenyl diphosphate biosynthesis via DXP pathway; isopentenyl diphosphate from 1-deoxy-D-xylulose 5-phosphate: step 3/6. Functionally, catalyzes the phosphorylation of the position 2 hydroxy group of 4-diphosphocytidyl-2C-methyl-D-erythritol. In Azorhizobium caulinodans (strain ATCC 43989 / DSM 5975 / JCM 20966 / LMG 6465 / NBRC 14845 / NCIMB 13405 / ORS 571), this protein is 4-diphosphocytidyl-2-C-methyl-D-erythritol kinase.